The primary structure comprises 409 residues: Na(+)-translocating NADH-quinone reductase subunit F (409 aa).

A helical membrane pass occupies residues 5–25 (FIFGIIAFTALVLVLAVIILF). The 2Fe-2S ferredoxin-type domain occupies 34 to 128 (GDITISINDD…SMDVELPEEI (95 aa)). The [2Fe-2S] cluster site is built by cysteine 71, cysteine 77, cysteine 80, and cysteine 112. Residues 131 to 271 (VKKWECTVIS…SGPFGEFFAK (141 aa)) form the FAD-binding FR-type domain.

This sequence belongs to the NqrF family. Composed of six subunits; NqrA, NqrB, NqrC, NqrD, NqrE and NqrF. [2Fe-2S] cluster is required as a cofactor. FAD serves as cofactor.

It is found in the cell inner membrane. It catalyses the reaction a ubiquinone + n Na(+)(in) + NADH + H(+) = a ubiquinol + n Na(+)(out) + NAD(+). In terms of biological role, NQR complex catalyzes the reduction of ubiquinone-1 to ubiquinol by two successive reactions, coupled with the transport of Na(+) ions from the cytoplasm to the periplasm. The first step is catalyzed by NqrF, which accepts electrons from NADH and reduces ubiquinone-1 to ubisemiquinone by a one-electron transfer pathway. In Haemophilus ducreyi (strain 35000HP / ATCC 700724), this protein is Na(+)-translocating NADH-quinone reductase subunit F.